The sequence spans 1293 residues: Enterobactin synthase component F (1293 aa).

An elongation/condensation region spans residues 1-301; sequence MSQHLPLVAA…NVLPLGIHIA (301 aa). The segment at 482 to 887 is adenylatione; the sequence is SYREMREQVV…ALPDVEQAVT (406 aa). The Carrier domain occupies 971 to 1046; sequence APKAGSETII…KLATIIDAEE (76 aa). Residue Ser1006 is modified to O-(pantetheine 4'-phosphoryl)serine. A thioesterase region spans residues 1066–1293; it reads PTLFCFHPAS…GPIIRATLNR (228 aa). Residue His1271 is the Proton acceptor; for thioesterase activity of the active site.

Belongs to the ATP-dependent AMP-binding enzyme family. EntF subfamily. As to quaternary structure, proteins EntB, EntD, EntE and EntF are the component of the enterobactin synthase. Components probably do not form a stable complex. EntF acts as a catalytic monomer. Interacts with the MbtH-like protein YbdZ. YbdZ binds to the adenylation domain, but does not alter the structure of the domain. Requires pantetheine 4'-phosphate as cofactor. Post-translationally, 4'-phosphopantetheine is transferred from CoA to a specific serine of apo-EntF by EntD. Holo-EntF so formed is then acylated with seryl-AMP.

The protein localises to the cytoplasm. The catalysed reaction is 3 2,3-dihydroxybenzoate + 3 L-serine + 6 ATP = enterobactin + 6 AMP + 6 diphosphate + 4 H(+). It catalyses the reaction holo-[peptidyl-carrier protein] + L-serine + ATP = L-seryl-[peptidyl-carrier protein] + AMP + diphosphate. The protein operates within siderophore biosynthesis; enterobactin biosynthesis. Adenylation activity is increased in the presence of the MbtH-like protein YbdZ. Functionally, involved in the biosynthesis of the siderophore enterobactin (enterochelin), which is a macrocyclic trimeric lactone of N-(2,3-dihydroxybenzoyl)-serine. EntF catalyzes the activation of L-serine via ATP-dependent PPi exchange reaction to form seryladenylate. Activated L-serine is loaded onto the peptidyl carrier domain via a thioester linkage to the phosphopanthetheine moiety, forming seryl-S-Ppant-EntF. EntF acts then as the sole catalyst for the formation of the three amide and three ester linkages found in enterobactin, using seryladenylate and 2,3-dihydroxybenzoate-S-Ppant-EntB (DHB-S-Ppant-EntB) as substrates, via the formation of a DHB-Ser-S-Ppant-EntF intermediate. In Escherichia coli (strain K12), this protein is Enterobactin synthase component F.